A 102-amino-acid chain; its full sequence is MPEICPICGLPKDLCVCEEIAKEEQKIKVYVTKRRFGKLMTVVDGFDADLIDVKDLAKKLKDICACGGTVKKDSIELQGDHRRKAEETLIKMGFSKDMIDVR.

Belongs to the SUI1 family.

This is Protein translation factor SUI1 homolog from Methanococcus maripaludis (strain C5 / ATCC BAA-1333).